The sequence spans 641 residues: Chaperone protein DnaK (641 aa).

At T200 the chain carries Phosphothreonine; by autocatalysis. Over residues A606 to K623 the composition is skewed to low complexity. The interval A606–V628 is disordered.

The protein belongs to the heat shock protein 70 family.

Acts as a chaperone. The protein is Chaperone protein DnaK of Xanthomonas axonopodis pv. citri (strain 306).